Consider the following 539-residue polypeptide: Chaperonin GroEL (539 aa).

Residues 29-32 (TLGP), 86-90 (DGTTT), G413, and D494 contribute to the ATP site.

It belongs to the chaperonin (HSP60) family. In terms of assembly, forms a cylinder of 14 subunits composed of two heptameric rings stacked back-to-back. Interacts with the co-chaperonin GroES.

The protein localises to the cytoplasm. The enzyme catalyses ATP + H2O + a folded polypeptide = ADP + phosphate + an unfolded polypeptide.. Its function is as follows. Together with its co-chaperonin GroES, plays an essential role in assisting protein folding. The GroEL-GroES system forms a nano-cage that allows encapsulation of the non-native substrate proteins and provides a physical environment optimized to promote and accelerate protein folding. The chain is Chaperonin GroEL from Finegoldia magna (strain ATCC 29328 / DSM 20472 / WAL 2508) (Peptostreptococcus magnus).